A 258-amino-acid polypeptide reads, in one-letter code: SLA class II histocompatibility antigen, DQ haplotype D beta chain (258 aa).

A signal peptide spans M1–D31. The segment at S32–R123 is beta-1. Over S32 to K227 the chain is Extracellular. Disulfide bonds link C44-C108 and C146-C202. An N-linked (GlcNAc...) asparagine glycan is attached at N48. The tract at residues V124–W217 is beta-2. The Ig-like C1-type domain occupies P126–S230. Residues R218 to K227 form a connecting peptide region. A helical transmembrane segment spans residues M228 to I248. The Cytoplasmic portion of the chain corresponds to R249–R258.

It belongs to the MHC class II family.

The protein localises to the membrane. The protein is SLA class II histocompatibility antigen, DQ haplotype D beta chain of Sus scrofa (Pig).